Consider the following 120-residue polypeptide: NAD(P)H-quinone oxidoreductase subunit 3, chloroplastic (120 aa).

3 helical membrane-spanning segments follow: residues 9-29, 64-84, and 88-108; these read IFWA…LISG, MFAL…PWAM, and VLGV…IVGS.

Belongs to the complex I subunit 3 family. NDH is composed of at least 16 different subunits, 5 of which are encoded in the nucleus.

It is found in the plastid. It localises to the chloroplast thylakoid membrane. The enzyme catalyses a plastoquinone + NADH + (n+1) H(+)(in) = a plastoquinol + NAD(+) + n H(+)(out). It catalyses the reaction a plastoquinone + NADPH + (n+1) H(+)(in) = a plastoquinol + NADP(+) + n H(+)(out). In terms of biological role, NDH shuttles electrons from NAD(P)H:plastoquinone, via FMN and iron-sulfur (Fe-S) centers, to quinones in the photosynthetic chain and possibly in a chloroplast respiratory chain. The immediate electron acceptor for the enzyme in this species is believed to be plastoquinone. Couples the redox reaction to proton translocation, and thus conserves the redox energy in a proton gradient. The sequence is that of NAD(P)H-quinone oxidoreductase subunit 3, chloroplastic from Acorus calamus var. americanus (American sweet flag).